The primary structure comprises 177 residues: Nucleoside triphosphate/diphosphate phosphatase (177 aa).

The active-site Proton donor is arginine 23. Residues asparagine 87, aspartate 103, aspartate 105, aspartate 107, aspartate 120, and glutamate 123 each coordinate Mg(2+).

This sequence belongs to the Ntdp family. The cofactor is Mg(2+).

It carries out the reaction a ribonucleoside 5'-triphosphate + H2O = a ribonucleoside 5'-diphosphate + phosphate + H(+). The enzyme catalyses a ribonucleoside 5'-diphosphate + H2O = a ribonucleoside 5'-phosphate + phosphate + H(+). Its function is as follows. Has nucleoside phosphatase activity towards nucleoside triphosphates and nucleoside diphosphates. The chain is Nucleoside triphosphate/diphosphate phosphatase from Streptococcus pneumoniae (strain ATCC 700669 / Spain 23F-1).